The primary structure comprises 244 residues: 5-oxoprolinase subunit A (244 aa).

This sequence belongs to the LamB/PxpA family. As to quaternary structure, forms a complex composed of PxpA, PxpB and PxpC.

It catalyses the reaction 5-oxo-L-proline + ATP + 2 H2O = L-glutamate + ADP + phosphate + H(+). Its function is as follows. Catalyzes the cleavage of 5-oxoproline to form L-glutamate coupled to the hydrolysis of ATP to ADP and inorganic phosphate. The polypeptide is 5-oxoprolinase subunit A (Escherichia coli (strain SMS-3-5 / SECEC)).